Reading from the N-terminus, the 313-residue chain is Malate dehydrogenase (313 aa).

NAD(+) contacts are provided by residues 11-16 and D35; that span reads GSGNIG. Residues R84 and R90 each coordinate substrate. Residues N97 and 120–122 contribute to the NAD(+) site; that span reads VTN. The substrate site is built by N122 and R153. H177 serves as the catalytic Proton acceptor.

This sequence belongs to the LDH/MDH superfamily. MDH type 3 family.

The enzyme catalyses (S)-malate + NAD(+) = oxaloacetate + NADH + H(+). In terms of biological role, catalyzes the reversible oxidation of malate to oxaloacetate. This is Malate dehydrogenase from Ehrlichia ruminantium (strain Welgevonden).